The following is a 401-amino-acid chain: Nicotinate phosphoribosyltransferase (401 aa).

His-221 carries the phosphohistidine; by autocatalysis modification.

This sequence belongs to the NAPRTase family. In terms of processing, transiently phosphorylated on a His residue during the reaction cycle. Phosphorylation strongly increases the affinity for substrates and increases the rate of nicotinate D-ribonucleotide production. Dephosphorylation regenerates the low-affinity form of the enzyme, leading to product release.

The catalysed reaction is nicotinate + 5-phospho-alpha-D-ribose 1-diphosphate + ATP + H2O = nicotinate beta-D-ribonucleotide + ADP + phosphate + diphosphate. Its pathway is cofactor biosynthesis; NAD(+) biosynthesis; nicotinate D-ribonucleotide from nicotinate: step 1/1. In terms of biological role, catalyzes the synthesis of beta-nicotinate D-ribonucleotide from nicotinate and 5-phospho-D-ribose 1-phosphate at the expense of ATP. This Pectobacterium carotovorum subsp. carotovorum (strain PC1) protein is Nicotinate phosphoribosyltransferase.